A 166-amino-acid polypeptide reads, in one-letter code: Phosphopantetheine adenylyltransferase (166 aa).

Residue T9 participates in substrate binding. ATP contacts are provided by residues 9 to 10 and H17; that span reads TF. The substrate site is built by K41, L73, and R87. Residues 88 to 90, E98, and 123 to 129 contribute to the ATP site; these read GLR and YQFISGT.

Belongs to the bacterial CoaD family. As to quaternary structure, homohexamer. It depends on Mg(2+) as a cofactor.

The protein resides in the cytoplasm. It carries out the reaction (R)-4'-phosphopantetheine + ATP + H(+) = 3'-dephospho-CoA + diphosphate. It functions in the pathway cofactor biosynthesis; coenzyme A biosynthesis; CoA from (R)-pantothenate: step 4/5. Its function is as follows. Reversibly transfers an adenylyl group from ATP to 4'-phosphopantetheine, yielding dephospho-CoA (dPCoA) and pyrophosphate. This chain is Phosphopantetheine adenylyltransferase, found in Burkholderia mallei (strain NCTC 10229).